The primary structure comprises 1571 residues: Neurexin-3 (1571 aa).

A signal peptide spans 1 to 27; it reads MSFTLHSVFFTLKVSIFLGSLVGLCLG. Residues 28–202 form the Laminin G-like 1 domain; it reads LEFMGLPNQW…SVQLEAEGPC (175 aa). Topologically, residues 28 to 1496 are extracellular; it reads LEFMGLPNQW…EVIRESSSTT (1469 aa). Residues N58 and N105 are each glycosylated (N-linked (GlcNAc...) asparagine). The EGF-like 1 domain occupies 198–235; it reads AEGPCGERPCENGGICFLLDGHPTCDCSTTGYGGTLCS. 3 cysteine pairs are disulfide-bonded: C202-C213, C207-C222, and C224-C234. 2 consecutive Laminin G-like domains span residues 258–440 and 447–639; these read VATF…VFKC and DPIN…KSSC. Ca(2+) contacts are provided by D304, L321, and M374. 5 cysteine pairs are disulfide-bonded: C404/C440, C610/C639, C647/C658, C652/C667, and C669/C679. One can recognise an EGF-like 2 domain in the interval 643-680; it reads SAKQCDSYPCKNNAVCKDGWNRFICDCTGTGYWGRTCE. 2 Laminin G-like domains span residues 685–857 and 871–1046; these read ILSY…IDYC and DPVT…ERGC. Positions 732 and 749 each coordinate Ca(2+). N757 carries N-linked (GlcNAc...) asparagine glycosylation. R807 serves as a coordination point for Ca(2+). 4 disulfides stabilise this stretch: C1018-C1046, C1053-C1064, C1058-C1073, and C1075-C1085. Residues 1049–1086 form the EGF-like 3 domain; sequence PSTTCQEDSCANQGVCMQQWEGFTCDCSMTSYSGNQCN. A Laminin G-like 6 domain is found at 1090-1290; sequence ATYIFGKSGG…NPNIKINGSV (201 aa). The Ca(2+) site is built by D1142 and I1159. A glycan (N-linked (GlcNAc...) asparagine) is linked at N1189. I1241 and N1243 together coordinate Ca(2+). N1287 and N1331 each carry an N-linked (GlcNAc...) asparagine glycan. The tract at residues 1324-1348 is disordered; the sequence is ATTTTRKNRSTASIQPTSDDLVSSA. Residues 1333-1348 show a composition bias toward polar residues; it reads STASIQPTSDDLVSSA. The O-linked (Xyl...) (heparan sulfate) serine glycan is linked to S1347. A helical membrane pass occupies residues 1497-1517; it reads GMVVGIVAAAALCILILLYAM. At 1518-1571 the chain is on the cytoplasmic side; sequence YKYRNRDEGSYQVDETRNYISNSAQSNGTLMKEKQASSKSGHKKQKNKDKEYYV. Residues 1539 to 1571 form a disordered region; the sequence is NSAQSNGTLMKEKQASSKSGHKKQKNKDKEYYV.

This sequence belongs to the neurexin family. As to quaternary structure, the laminin G-like domain 2 binds to NXPH1. Specific isoforms bind to alpha-dystroglycan. The cytoplasmic C-terminal region binds to CASK. Specific isoforms bind neuroligins NLGN1, NLGN2 and NLGN3. Interacts with CLSTN3. Post-translationally, O-glycosylated; contains heparan sulfate. Heparan sulfate attachment is required for synapse development by mediating interactions with neuroligins. As to expression, brain and arteries (at protein level).

The protein localises to the presynaptic cell membrane. Its function is as follows. Neuronal cell surface protein that may be involved in cell recognition and cell adhesion. May mediate intracellular signaling. In Mus musculus (Mouse), this protein is Neurexin-3 (Nrxn3).